A 271-amino-acid polypeptide reads, in one-letter code: NH(3)-dependent NAD(+) synthetase (271 aa).

43–50 (GISGGQDS) serves as a coordination point for ATP. Residue Asp-49 participates in Mg(2+) binding. Arg-137 contacts deamido-NAD(+). Thr-157 provides a ligand contact to ATP. Residue Glu-162 participates in Mg(2+) binding. Residues Lys-170 and Asp-177 each coordinate deamido-NAD(+). ATP is bound by residues Lys-186 and Thr-208. Residue 257-258 (HK) participates in deamido-NAD(+) binding.

Belongs to the NAD synthetase family. As to quaternary structure, homodimer.

It catalyses the reaction deamido-NAD(+) + NH4(+) + ATP = AMP + diphosphate + NAD(+) + H(+). It functions in the pathway cofactor biosynthesis; NAD(+) biosynthesis; NAD(+) from deamido-NAD(+) (ammonia route): step 1/1. Its function is as follows. Catalyzes the ATP-dependent amidation of deamido-NAD to form NAD. Uses ammonia as a nitrogen source. This is NH(3)-dependent NAD(+) synthetase from Exiguobacterium sibiricum (strain DSM 17290 / CCUG 55495 / CIP 109462 / JCM 13490 / 255-15).